We begin with the raw amino-acid sequence, 316 residues long: Serpentine receptor class delta-48 (316 aa).

7 helical membrane passes run 8 to 28, 42 to 62, 89 to 109, 127 to 147, 185 to 205, 236 to 256, and 269 to 289; these read FFYITFFILVLPTQIFGIFVI, FLLCNLICQIISVATLCLLQL, LFYVLSQISTLMTYFLVFITI, VVIILMLLLPIFITMVAQIDL, FLLTVIIFGSVFLLPPAGFFI, TLQSFLPLVCICPIFACYFVV, and ILPVLVMLPTLFDPYIILYSV.

It belongs to the nematode receptor-like protein srd family.

Its subcellular location is the membrane. This is Serpentine receptor class delta-48 (srd-48) from Caenorhabditis elegans.